Here is a 481-residue protein sequence, read N- to C-terminus: MNWSDLNLMPALPEVALLSLLVLLLPADLWASDDKCRWTHYGALATVAVTAAVQLAVWEQGSTSSFNGMYIADGMSRLAKMVLYALTFVLFVYAKPYNQVRGIFKGEFYTLSLFALLGMSVMVSAGHFLTAYIGLELLSLALYALIALRRDSGFAAEAALKYFVLGALASGLLLYGISMVYGATGSLEFAGVLASSFNEEANEWLLKLGLVFIVVAVAFKLGAVPFHMWMPDVYHGAPTSVTALVGTAPKIAAVVFAFRILVTGLGTVHHDWSLMFALLAAASLLVGNLAAIMQTNIKRMLAYSTVSHMGFILLAFMAGAVGFAAGLYYAITYALMAAAGFGVLMVLSDGDNECENISDLAGLNQHRVWLAFLMLLVMFSMAGIPPLMGFYAKFGVIMALLKQGYVWLSVFAVVMSLVGAFYYLRVVKVMYFDESGRARPAAGGNNAAKSLLSVNALLLVLWGIMPQTVIDWCAKALENTL.

The next 14 helical transmembrane spans lie at 11–31, 38–58, 74–94, 103–123, 128–148, 163–183, 208–228, 241–261, 272–292, 300–322, 332–352, 368–388, 404–424, and 450–470; these read ALPEVALLSLLVLLLPADLWA, WTHYGALATVAVTAAVQLAVW, GMSRLAKMVLYALTFVLFVYA, IFKGEFYTLSLFALLGMSVMV, FLTAYIGLELLSLALYALIAL, FVLGALASGLLLYGISMVYGA, LGLVFIVVAVAFKLGAVPFHM, VTALVGTAPKIAAVVFAFRIL, WSLMFALLAAASLLVGNLAAI, MLAYSTVSHMGFILLAFMAGAVG, TYALMAAAGFGVLMVLSDGDN, VWLAFLMLLVMFSMAGIPPLM, GYVWLSVFAVVMSLVGAFYYL, and SLLSVNALLLVLWGIMPQTVI.

This sequence belongs to the complex I subunit 2 family. In terms of assembly, NDH-1 is composed of 14 different subunits. Subunits NuoA, H, J, K, L, M, N constitute the membrane sector of the complex.

Its subcellular location is the cell inner membrane. It catalyses the reaction a quinone + NADH + 5 H(+)(in) = a quinol + NAD(+) + 4 H(+)(out). NDH-1 shuttles electrons from NADH, via FMN and iron-sulfur (Fe-S) centers, to quinones in the respiratory chain. The immediate electron acceptor for the enzyme in this species is believed to be ubiquinone. Couples the redox reaction to proton translocation (for every two electrons transferred, four hydrogen ions are translocated across the cytoplasmic membrane), and thus conserves the redox energy in a proton gradient. The protein is NADH-quinone oxidoreductase subunit N of Neisseria gonorrhoeae (strain ATCC 700825 / FA 1090).